The sequence spans 128 residues: MEGKTVIVSLLLLSIVVGQIQVEAKSCCPSTTARNIYNTCRFGGGSRTLCAKLSGCKIVSGTTCPKLSIPEVTGEAVNEYCKLGCSFSVCRAITTLQNTDAGEVLNEAAEKCNNACSTLCTKNSIETA.

A signal peptide spans 1 to 24; the sequence is MEGKTVIVSLLLLSIVVGQIQVEA. Intrachain disulfides connect C27–C64, C28–C56, and C40–C50. The propeptide at 67–128 is acidic domain; that stretch reads LSIPEVTGEA…LCTKNSIETA (62 aa).

This sequence belongs to the plant thionin (TC 1.C.44) family. As to expression, expressed in trichomes, that are stiff epidermal hairs located on the surface of petioles and leaves.

It is found in the secreted. Its function is as follows. Plant defense protein that causes pain by probable disruption of cell membranes. Shows cytotoxic activity against the neuroblastoma cell line SH-SY5Y and slightly weaker activity against several non-neuronal cell lines. In vivo, intraplantar injection into mice causes several nocifensive responses, along with swelling and redness. This chain is DELTA-urthionin-Uf1a, found in Urtica ferox (Tree nettle).